The sequence spans 1481 residues: Cystic fibrosis transmembrane conductance regulator (1481 aa).

The Cytoplasmic segment spans residues M1–F77. The helical transmembrane segment at F78 to Q98 threads the bilayer. In terms of domain architecture, ABC transmembrane type-1 1 spans F81–L365. Topologically, residues P99–Y122 are extracellular. Residues L123 to H146 traverse the membrane as a helical segment. The Cytoplasmic portion of the chain corresponds to H147–L195. A helical transmembrane segment spans residues A196–W216. At E217–S222 the chain is on the extracellular side. A helical transmembrane segment spans residues A223 to M243. Over M244–K298 the chain is Cytoplasmic. Residues A299 to F319 traverse the membrane as a helical segment. Topologically, residues L320–T339 are extracellular. A helical membrane pass occupies residues I340–V358. Residues Q359–S858 are Cytoplasmic-facing. Residues W401, S434, G458–T465, and Q493 contribute to the ATP site. One can recognise an ABC transporter 1 domain in the interval N423–G646. The S-palmitoyl cysteine moiety is linked to residue C524. 2 positions are modified to phosphoserine: S549 and S660. The tract at residues S654–E831 is disordered R region. Position 670 is a phosphoserine; by PKA (S670). S686 carries the post-translational modification Phosphoserine. K688 participates in a covalent cross-link: Glycyl lysine isopeptide (Lys-Gly) (interchain with G-Cter in ubiquitin). S700 and S712 each carry phosphoserine. Position 717 is a phosphothreonine (T717). Residues S737, S753, S768, S790, S795, and S813 each carry the phosphoserine modification. The helical transmembrane segment at L859 to V879 threads the bilayer. The ABC transmembrane type-1 2 domain occupies L859–S1155. The Extracellular portion of the chain corresponds to V880–I918. N-linked (GlcNAc...) asparagine glycans are attached at residues N894 and N900. The chain crosses the membrane as a discontinuously helical span at residues Y919–H939. The Cytoplasmic portion of the chain corresponds to T940 to T990. Residues I991–L1011 form a helical membrane-spanning segment. At Q1012 to P1013 the chain is on the extracellular side. A helical transmembrane segment spans residues Y1014 to L1034. Topologically, residues Q1035–T1095 are cytoplasmic. The chain crosses the membrane as a helical span at residues L1096 to F1116. The Extracellular portion of the chain corresponds to I1117–G1130. A helical transmembrane segment spans residues I1131–I1151. Residues D1152–L1481 lie on the Cytoplasmic side of the membrane. The ABC transporter 2 domain occupies M1211–P1444. Residues Y1220 and G1245–S1252 contribute to the ATP site. An interaction with GORASP2 region spans residues R1387–L1481. C1396 carries S-palmitoyl cysteine lipidation. S1445 and S1457 each carry phosphoserine. Positions Q1462–L1481 are disordered. The segment covering E1471 to L1481 has biased composition (acidic residues). The PDZ-binding signature appears at T1479 to L1481.

Belongs to the ABC transporter superfamily. ABCC family. CFTR transporter (TC 3.A.1.202) subfamily. In terms of assembly, monomer; does not require oligomerization for channel activity. May form oligomers in the membrane. Interacts with SLC26A3, SLC26A6 and NHERF1. Interacts with SHANK2. Interacts with MYO6. Interacts (via C-terminus) with GOPC (via PDZ domain); this promotes CFTR internalization and thereby decreases channel activity. Interacts with SLC4A7 through NHERF1. Found in a complex with MYO5B and RAB11A. Interacts with ANO1. Interacts with SLC26A8. Interacts with AHCYL1; the interaction increases CFTR activity. Interacts with CSE1L. The core-glycosylated form interacts with GORASP2 (via PDZ GRASP-type 1 domain) in respone to ER stress. Interacts with MARCHF2; the interaction leads to CFTR ubiqtuitination and degradation. Interacts with ADGRG2. In terms of processing, N-glycosylated. Post-translationally, phosphorylated; cAMP treatment promotes phosphorylation and activates the channel. Dephosphorylation decreases the ATPase activity (in vitro). Phosphorylation at PKA sites activates the channel. Phosphorylation at PKC sites enhances the response to phosphorylation by PKA. Phosphorylated by AMPK; this inhibits channel activity. Ubiquitinated, leading to its degradation in the lysosome. Deubiquitination by USP10 in early endosomes enhances its endocytic recycling to the cell membrane. Ubiquitinated by RNF185 during ER stress. Ubiquitinated by MARCHF2.

The protein localises to the apical cell membrane. Its subcellular location is the early endosome membrane. It localises to the cell membrane. The protein resides in the recycling endosome membrane. It is found in the endoplasmic reticulum membrane. The protein localises to the nucleus. It carries out the reaction ATP + H2O + closed Cl(-) channel = ADP + phosphate + open Cl(-) channel.. The enzyme catalyses chloride(in) = chloride(out). It catalyses the reaction hydrogencarbonate(in) = hydrogencarbonate(out). The catalysed reaction is ATP + H2O = ADP + phosphate + H(+). Epithelial ion channel that plays an important role in the regulation of epithelial ion and water transport and fluid homeostasis. Mediates the transport of chloride ions across the cell membrane. Possesses an intrinsic ATPase activity and utilizes ATP to gate its channel; the passive flow of anions through the channel is gated by cycles of ATP binding and hydrolysis by the ATP-binding domains. The ion channel is also permeable to HCO(3)(-); selectivity depends on the extracellular chloride concentration. Exerts its function also by modulating the activity of other ion channels and transporters. Contributes to the regulation of the pH and the ion content of the epithelial fluid layer. Modulates the activity of the epithelial sodium channel (ENaC) complex, in part by regulating the cell surface expression of the ENaC complex. May regulate bicarbonate secretion and salvage in epithelial cells by regulating the transporter SLC4A7. Can inhibit the chloride channel activity of ANO1. Plays a role in the chloride and bicarbonate homeostasis during sperm epididymal maturation and capacitation. The polypeptide is Cystic fibrosis transmembrane conductance regulator (Chlorocebus aethiops (Green monkey)).